The primary structure comprises 335 residues: Succinylglutamate desuccinylase (335 aa).

Residues H59, E62, and H151 each contribute to the Zn(2+) site. E215 is a catalytic residue.

This sequence belongs to the AspA/AstE family. Succinylglutamate desuccinylase subfamily. Zn(2+) serves as cofactor.

It carries out the reaction N-succinyl-L-glutamate + H2O = L-glutamate + succinate. It participates in amino-acid degradation; L-arginine degradation via AST pathway; L-glutamate and succinate from L-arginine: step 5/5. Its function is as follows. Transforms N(2)-succinylglutamate into succinate and glutamate. This is Succinylglutamate desuccinylase from Pseudomonas syringae pv. tomato (strain ATCC BAA-871 / DC3000).